The chain runs to 152 residues: Ribonuclease HI (152 aa).

In terms of domain architecture, RNase H type-1 spans 1–142 (MDSKVVIYTD…ADKLAVQGRE (142 aa)). The Mg(2+) site is built by Asp-10, Glu-48, Asp-70, and Asp-134.

This sequence belongs to the RNase H family. As to quaternary structure, monomer. Requires Mg(2+) as cofactor.

It is found in the cytoplasm. It carries out the reaction Endonucleolytic cleavage to 5'-phosphomonoester.. Its function is as follows. Endonuclease that specifically degrades the RNA of RNA-DNA hybrids. The sequence is that of Ribonuclease HI (rnhA) from Rickettsia prowazekii (strain Madrid E).